The chain runs to 464 residues: Trigger factor (464 aa).

The PPIase FKBP-type domain occupies 169–256 (GDVAIVDYRG…MKELKAKELP (88 aa)).

This sequence belongs to the FKBP-type PPIase family. Tig subfamily.

It localises to the cytoplasm. The enzyme catalyses [protein]-peptidylproline (omega=180) = [protein]-peptidylproline (omega=0). Involved in protein export. Acts as a chaperone by maintaining the newly synthesized protein in an open conformation. Functions as a peptidyl-prolyl cis-trans isomerase. In Microcystis aeruginosa (strain NIES-843 / IAM M-2473), this protein is Trigger factor.